The following is a 1274-amino-acid chain: Regulator of telomere elongation helicase 1 (1274 aa).

A Helicase ATP-binding domain is found at 7–296 (NGVTVDFPFQ…ARVAQHGELQ (290 aa)). Residue 42–49 (SPTGTGKT) participates in ATP binding. Cys145, Cys163, Cys172, and Cys207 together coordinate [4Fe-4S] cluster. The Nuclear localization signal motif lies at 151 to 167 (KKQESNHMQISLCRKKV). The short motif at 250–253 (DEAH) is the DEAH box element. Residues 871–877 (QRGGKKK) carry the Nuclear localization signal motif. Disordered stretches follow at residues 982-1002 (NSLPFGEQAQSTASKQGRREL), 1014-1038 (RQLDPGEHLNQGWPHLSTHLTSKGD), and 1143-1198 (ELPC…DDTI). Residues 1186 to 1196 (QRPDQSARSDD) show a composition bias toward basic and acidic residues.

It belongs to the helicase family. RAD3/XPD subfamily. As to quaternary structure, interacts with TERF1. Interacts (via PIP-box) with PCNA; the interaction is direct and essential for suppressing telomere fragility. Interacts with MMS19; the interaction mediates the association of RTEL1 with the cytosolic iron-sulfur protein assembly (CIA) complex.

Its subcellular location is the nucleus. The enzyme catalyses ATP + H2O = ADP + phosphate + H(+). In terms of biological role, a probable ATP-dependent DNA helicase implicated in telomere-length regulation, DNA repair and the maintenance of genomic stability. Acts as an anti-recombinase to counteract toxic recombination and limit crossover during meiosis. Regulates meiotic recombination and crossover homeostasis by physically dissociating strand invasion events and thereby promotes noncrossover repair by meiotic synthesis dependent strand annealing (SDSA) as well as disassembly of D loop recombination intermediates. Also disassembles T loops and prevents telomere fragility by counteracting telomeric G4-DNA structures, which together ensure the dynamics and stability of the telomere. The sequence is that of Regulator of telomere elongation helicase 1 (Rtel1) from Rattus norvegicus (Rat).